Consider the following 89-residue polypeptide: Small ribosomal subunit protein uS15 (89 aa).

The protein belongs to the universal ribosomal protein uS15 family. In terms of assembly, part of the 30S ribosomal subunit. Forms a bridge to the 50S subunit in the 70S ribosome, contacting the 23S rRNA.

One of the primary rRNA binding proteins, it binds directly to 16S rRNA where it helps nucleate assembly of the platform of the 30S subunit by binding and bridging several RNA helices of the 16S rRNA. Its function is as follows. Forms an intersubunit bridge (bridge B4) with the 23S rRNA of the 50S subunit in the ribosome. In Nostoc sp. (strain PCC 7120 / SAG 25.82 / UTEX 2576), this protein is Small ribosomal subunit protein uS15.